The sequence spans 322 residues: uncharacterized protein (322 aa).

Over residues 1–13 the composition is skewed to polar residues; it reads MTNADEQNMGQQE. Disordered stretches follow at residues 1-94 and 125-322; these read MTNA…EEYE and RREM…TDEE. The span at 14-31 shows a compositional bias: low complexity; that stretch reads GTDTATTAQDTNTQTVGT. Polar residues predominate over residues 32–50; it reads QSENTQNTQQASDAQTEQT. Positions 64 to 75 are enriched in acidic residues; that stretch reads EVDEDDVLDAQE. Basic and acidic residues-rich tracts occupy residues 141-227, 235-269, 277-295, and 308-322; these read GGDR…RGGD, RPRE…RGGD, RPRE…RTDD, and ARAD…TDEE.

This is an uncharacterized protein from Deinococcus radiodurans (strain ATCC 13939 / DSM 20539 / JCM 16871 / CCUG 27074 / LMG 4051 / NBRC 15346 / NCIMB 9279 / VKM B-1422 / R1).